We begin with the raw amino-acid sequence, 385 residues long: Galactokinase (385 aa).

Substrate is bound at residue 34–37 (EHTD). Position 124 to 130 (124 to 130 (SSGLSSS)) interacts with ATP. Mg(2+)-binding residues include Ser130 and Glu162. The Proton acceptor role is filled by Asp174. Position 223 (Tyr223) interacts with substrate.

Belongs to the GHMP kinase family. GalK subfamily.

Its subcellular location is the cytoplasm. The catalysed reaction is alpha-D-galactose + ATP = alpha-D-galactose 1-phosphate + ADP + H(+). Its pathway is carbohydrate metabolism; galactose metabolism. In terms of biological role, catalyzes the transfer of the gamma-phosphate of ATP to D-galactose to form alpha-D-galactose-1-phosphate (Gal-1-P). This is Galactokinase from Actinobacillus succinogenes (strain ATCC 55618 / DSM 22257 / CCUG 43843 / 130Z).